A 184-amino-acid chain; its full sequence is Large ribosomal subunit protein uL22A (184 aa).

Lysine 46 participates in a covalent cross-link: Glycyl lysine isopeptide (Lys-Gly) (interchain with G-Cter in ubiquitin). Phosphothreonine is present on threonine 70.

It belongs to the universal ribosomal protein uL22 family. In terms of assembly, component of the large ribosomal subunit (LSU). Mature yeast ribosomes consist of a small (40S) and a large (60S) subunit. The 40S small subunit contains 1 molecule of ribosomal RNA (18S rRNA) and 33 different proteins (encoded by 57 genes). The large 60S subunit contains 3 rRNA molecules (25S, 5.8S and 5S rRNA) and 46 different proteins (encoded by 81 genes). uL22 is associated with the polypeptide exit tunnel.

The protein localises to the cytoplasm. Functionally, component of the ribosome, a large ribonucleoprotein complex responsible for the synthesis of proteins in the cell. The small ribosomal subunit (SSU) binds messenger RNAs (mRNAs) and translates the encoded message by selecting cognate aminoacyl-transfer RNA (tRNA) molecules. The large subunit (LSU) contains the ribosomal catalytic site termed the peptidyl transferase center (PTC), which catalyzes the formation of peptide bonds, thereby polymerizing the amino acids delivered by tRNAs into a polypeptide chain. The nascent polypeptides leave the ribosome through a tunnel in the LSU and interact with protein factors that function in enzymatic processing, targeting, and the membrane insertion of nascent chains at the exit of the ribosomal tunnel. This chain is Large ribosomal subunit protein uL22A, found in Saccharomyces cerevisiae (strain ATCC 204508 / S288c) (Baker's yeast).